The following is a 616-amino-acid chain: Elongation factor 4 (616 aa).

Residues 17 to 203 enclose the tr-type G domain; the sequence is ERIRNFCIIA…RVCELVPAPV (187 aa). Residues 29 to 34 and 150 to 153 contribute to the GTP site; these read DHGKST and NKID.

Belongs to the TRAFAC class translation factor GTPase superfamily. Classic translation factor GTPase family. LepA subfamily.

It localises to the cell membrane. It carries out the reaction GTP + H2O = GDP + phosphate + H(+). Its function is as follows. Required for accurate and efficient protein synthesis under certain stress conditions. May act as a fidelity factor of the translation reaction, by catalyzing a one-codon backward translocation of tRNAs on improperly translocated ribosomes. Back-translocation proceeds from a post-translocation (POST) complex to a pre-translocation (PRE) complex, thus giving elongation factor G a second chance to translocate the tRNAs correctly. Binds to ribosomes in a GTP-dependent manner. The polypeptide is Elongation factor 4 (Corynebacterium jeikeium (strain K411)).